Here is a 530-residue protein sequence, read N- to C-terminus: MGSVGSQRLEEPSVAGTPDPGVVMSFTFDSHQLEEAAEAAQGQGLRARGVPAFTDTTLDEPVPDDRYHAIYFAMLLAGVGFLLPYNSFITDVDYLHHKYPGTSIVFDMSLTYILVALAAVLLNNVLVERLTLHTRITAGYLLALGPLLFISICDVWLQLFSRDQAYAINLAAVGTVAFGCTVQQSSFYGYTGMLPKRYTQGVMTGESTAGVMISLSRILTKLLLPDERASTLIFFLVSVALELLCFLLHLLVRRSRFVLFYTTRPRDSHRGRPGLGRGYGYRVHHDVVAGDVHFEHPAPALAPNESPKDSPAHEVTGSGGAYMRFDVPRPRVQRSWPTFRALLLHRYVVARVIWADMLSIAVTYFITLCLFPGLESEIRHCILGEWLPILIMAVFNLSDFVGKILAALPVDWRGTHLLACSCLRVVFIPLFILCVYPSGMPALRHPAWPCIFSLLMGISNGYFGSVPMILAAGKVSPKQRELAGNTMTVSYMSGLTLGSAVAYCTYSLTRDAHGSCLHASTANGSILAGL.

Positions 1-21 (MGSVGSQRLEEPSVAGTPDPG) are disordered. Over 1-68 (MGSVGSQRLE…DEPVPDDRYH (68 aa)) the chain is Extracellular. The chain crosses the membrane as a helical span at residues 69–89 (AIYFAMLLAGVGFLLPYNSFI). Residues 90-101 (TDVDYLHHKYPG) are Cytoplasmic-facing. Residues 102 to 122 (TSIVFDMSLTYILVALAAVLL) form a helical membrane-spanning segment. Residues 123 to 139 (NNVLVERLTLHTRITAG) are Extracellular-facing. Residues 140–160 (YLLALGPLLFISICDVWLQLF) form a helical membrane-spanning segment. The Cytoplasmic portion of the chain corresponds to 161-166 (SRDQAY). Residues 167–187 (AINLAAVGTVAFGCTVQQSSF) form a helical membrane-spanning segment. Residues 188–231 (YGYTGMLPKRYTQGVMTGESTAGVMISLSRILTKLLLPDERAST) are Extracellular-facing. The helical transmembrane segment at 232-252 (LIFFLVSVALELLCFLLHLLV) threads the bilayer. At 253–351 (RRSRFVLFYT…LLLHRYVVAR (99 aa)) the chain is on the cytoplasmic side. Residues 352 to 372 (VIWADMLSIAVTYFITLCLFP) form a helical membrane-spanning segment. At 373-381 (GLESEIRHC) the chain is on the extracellular side. The chain crosses the membrane as a helical span at residues 382–402 (ILGEWLPILIMAVFNLSDFVG). The Cytoplasmic portion of the chain corresponds to 403–416 (KILAALPVDWRGTH). The chain crosses the membrane as a helical span at residues 417–437 (LLACSCLRVVFIPLFILCVYP). Residues 438–450 (SGMPALRHPAWPC) lie on the Extracellular side of the membrane. Residues 451–471 (IFSLLMGISNGYFGSVPMILA) form a helical membrane-spanning segment. The Cytoplasmic segment spans residues 472–486 (AGKVSPKQRELAGNT). A helical membrane pass occupies residues 487–509 (MTVSYMSGLTLGSAVAYCTYSLT). Residues 510-530 (RDAHGSCLHASTANGSILAGL) are Extracellular-facing. Asn523 carries N-linked (GlcNAc...) asparagine glycosylation.

This sequence belongs to the SLC29A/ENT transporter (TC 2.A.57) family. Post-translationally, N-glycosylated. As to expression, mainly expressed in brain and skeletal muscle. In brain, expressed in cerebellum, cerebral cortex, medulla oblongata, occipital pole, frontal and temporal lobes putamen, spinal cord, substancia nigra, hippocampus, caudate nucleus, nucleus accumbens, pons and choroid plexus. Expressed in heart, in both cardiomyocytes and vascular endothelial cells. Also expressed in adrenal gland, small intestine, pancreas, kidney, liver, bone marrow, lymph node. Located in endometrial stroma, where the expression is high in the proliferative phase, decreases during the secretory phase, and is no longer detectable in the menstrual phase.

The protein localises to the cell membrane. The protein resides in the apical cell membrane. The catalysed reaction is serotonin(out) = serotonin(in). It carries out the reaction dopamine(out) = dopamine(in). The enzyme catalyses (R)-noradrenaline(out) = (R)-noradrenaline(in). It catalyses the reaction (R)-adrenaline(out) = (R)-adrenaline(in). The catalysed reaction is histamine(out) = histamine(in). It carries out the reaction tyramine(in) = tyramine(out). The enzyme catalyses guanidine(out) = guanidine(in). It catalyses the reaction adenosine(in) = adenosine(out). With respect to regulation, activated at acidic pH. Functionally, electrogenic voltage-dependent transporter that mediates the transport of a variety of endogenous bioactive amines, cationic xenobiotics and drugs. Utilizes the physiologic inside-negative membrane potential as a driving force to facilitate cellular uptake of organic cations. Functions as a Na(+)- and Cl(-)-independent bidirectional transporter. Substrate transport is pH-dependent and enhanced under acidic condition, which is most likely the result of allosteric changes in the transporter structure. Implicated in monoamine neurotransmitters uptake such as serotonin, dopamine, adrenaline/epinephrine, noradrenaline/norepinephrine, histamine and tyramine, thereby supporting a role in homeostatic regulation of aminergic neurotransmission in the central nervous system. Also responsible for the uptake of bioactive amines and drugs through the blood-cerebrospinal fluid (CSF) barrier, from the CSF into choroid plexus epithelial cells, thereby playing a significant role in the clearance of cationic neurotoxins, xenobiotics and metabolic waste in the brain. Involved in bidirectional transport of the purine nucleoside adenosine and plays a role in the regulation of extracellular adenosine concentrations in cardiac tissues, in particular during ischemia. May be involved in organic cation uptake from the tubular lumen into renal tubular cells, thereby contributing to organic cation reabsorption in the kidney. Also transports guanidine. The chain is Equilibrative nucleoside transporter 4 from Homo sapiens (Human).